The following is a 323-amino-acid chain: Ferrochelatase (323 aa).

Positions 196 and 277 each coordinate Fe cation.

This sequence belongs to the ferrochelatase family.

The protein resides in the cytoplasm. The enzyme catalyses heme b + 2 H(+) = protoporphyrin IX + Fe(2+). The protein operates within porphyrin-containing compound metabolism; protoheme biosynthesis; protoheme from protoporphyrin-IX: step 1/1. Catalyzes the ferrous insertion into protoporphyrin IX. This chain is Ferrochelatase, found in Haemophilus influenzae (strain 86-028NP).